Consider the following 716-residue polypeptide: Fatty acid oxidation complex subunit alpha (716 aa).

The enoyl-CoA hydratase/isomerase stretch occupies residues 1 to 189; the sequence is MIYQSPTIQV…KVGAVDAVVA (189 aa). D296 is a binding site for substrate. The interval 311-716 is 3-hydroxyacyl-CoA dehydrogenase; it reads KEVNNAAVLG…AANNGSYYQA (406 aa). NAD(+) is bound by residues M324, D343, 400–402, K407, and S429; that span reads VVE. H450 (for 3-hydroxyacyl-CoA dehydrogenase activity) is an active-site residue. NAD(+) is bound at residue N453. 2 residues coordinate substrate: N500 and Y660.

In the N-terminal section; belongs to the enoyl-CoA hydratase/isomerase family. It in the C-terminal section; belongs to the 3-hydroxyacyl-CoA dehydrogenase family. As to quaternary structure, heterotetramer of two alpha chains (FadB) and two beta chains (FadA).

It carries out the reaction a (3S)-3-hydroxyacyl-CoA + NAD(+) = a 3-oxoacyl-CoA + NADH + H(+). The enzyme catalyses a (3S)-3-hydroxyacyl-CoA = a (2E)-enoyl-CoA + H2O. It catalyses the reaction a 4-saturated-(3S)-3-hydroxyacyl-CoA = a (3E)-enoyl-CoA + H2O. The catalysed reaction is (3S)-3-hydroxybutanoyl-CoA = (3R)-3-hydroxybutanoyl-CoA. It carries out the reaction a (3Z)-enoyl-CoA = a 4-saturated (2E)-enoyl-CoA. The enzyme catalyses a (3E)-enoyl-CoA = a 4-saturated (2E)-enoyl-CoA. It functions in the pathway lipid metabolism; fatty acid beta-oxidation. Involved in the aerobic and anaerobic degradation of long-chain fatty acids via beta-oxidation cycle. Catalyzes the formation of 3-oxoacyl-CoA from enoyl-CoA via L-3-hydroxyacyl-CoA. It can also use D-3-hydroxyacyl-CoA and cis-3-enoyl-CoA as substrate. The polypeptide is Fatty acid oxidation complex subunit alpha (Shewanella baltica (strain OS155 / ATCC BAA-1091)).